A 348-amino-acid chain; its full sequence is Protein RecA (348 aa).

65–72 (GPESSGKT) contacts ATP.

This sequence belongs to the RecA family.

The protein resides in the cytoplasm. In terms of biological role, can catalyze the hydrolysis of ATP in the presence of single-stranded DNA, the ATP-dependent uptake of single-stranded DNA by duplex DNA, and the ATP-dependent hybridization of homologous single-stranded DNAs. It interacts with LexA causing its activation and leading to its autocatalytic cleavage. The polypeptide is Protein RecA (Enterococcus faecalis (strain ATCC 700802 / V583)).